A 628-amino-acid chain; its full sequence is Eukaryotic peptide chain release factor GTP-binding subunit ERF3B (628 aa).

Positions 1 to 10 (MDSGSSSSDS) are enriched in low complexity. 3 disordered regions span residues 1 to 49 (MDSG…SAFS), 72 to 124 (FLRG…LEGS), and 146 to 195 (LEES…VIVP). In terms of domain architecture, tr-type G spans 201 to 425 (KEHVNVVFIG…YLDNLPNFNR (225 aa)). The interval 210–217 (GHVDAGKS) is G1. GTP is bound at residue 213–218 (DAGKST). Residues 266-270 (GKTVE) are G2. Residues 287–290 (DAPG) are G3. GTP is bound by residues 349 to 352 (NKMD) and 391 to 393 (SGL). The G4 stretch occupies residues 349–352 (NKMD). The segment at 391-393 (SGL) is G5.

Belongs to the TRAFAC class translation factor GTPase superfamily. Classic translation factor GTPase family. ERF3 subfamily. As to quaternary structure, component of the eRF1-eRF3-GTP ternary complex, composed of ETF1/ERF1 and ERF3 (GSPT1/ERF3A or GSPT2/ERF3B) and GTP. Component of the transient SURF (SMG1-UPF1-eRF1-eRF3) complex. Interacts with UPF1 and PABPC1. In terms of tissue distribution, highly expressed in IUCC stage II colorectal cancer (CRC).

Its subcellular location is the cytoplasm. It carries out the reaction GTP + H2O = GDP + phosphate + H(+). GTPase component of the eRF1-eRF3-GTP ternary complex, a ternary complex that mediates translation termination in response to the termination codons UAA, UAG and UGA. GSPT2/ERF3B mediates ETF1/ERF1 delivery to stop codons: The eRF1-eRF3-GTP complex binds to a stop codon in the ribosomal A-site. GTP hydrolysis by GSPT2/ERF3B induces a conformational change that leads to its dissociation, permitting ETF1/ERF1 to accommodate fully in the A-site. Component of the transient SURF complex which recruits UPF1 to stalled ribosomes in the context of nonsense-mediated decay (NMD) of mRNAs containing premature stop codons. The chain is Eukaryotic peptide chain release factor GTP-binding subunit ERF3B (GSPT2) from Homo sapiens (Human).